Reading from the N-terminus, the 446-residue chain is Tubulin beta chain (446 aa).

GTP contacts are provided by Gln11, Glu69, Ser138, Gly142, Thr143, Gly144, Asn204, and Asn226. Glu69 contributes to the Mg(2+) binding site. A disordered region spans residues 421–446 (EYQQYQDAGIDEEEEEYEEELPEGEE). Over residues 429–446 (GIDEEEEEYEEELPEGEE) the composition is skewed to acidic residues.

It belongs to the tubulin family. Dimer of alpha and beta chains. A typical microtubule is a hollow water-filled tube with an outer diameter of 25 nm and an inner diameter of 15 nM. Alpha-beta heterodimers associate head-to-tail to form protofilaments running lengthwise along the microtubule wall with the beta-tubulin subunit facing the microtubule plus end conferring a structural polarity. Microtubules usually have 13 protofilaments but different protofilament numbers can be found in some organisms and specialized cells. Mg(2+) serves as cofactor.

It is found in the cytoplasm. It localises to the cytoskeleton. Its function is as follows. Tubulin is the major constituent of microtubules, a cylinder consisting of laterally associated linear protofilaments composed of alpha- and beta-tubulin heterodimers. Microtubules grow by the addition of GTP-tubulin dimers to the microtubule end, where a stabilizing cap forms. Below the cap, tubulin dimers are in GDP-bound state, owing to GTPase activity of alpha-tubulin. This Fusarium fujikuroi (Bakanae and foot rot disease fungus) protein is Tubulin beta chain (TUB2).